Here is a 100-residue protein sequence, read N- to C-terminus: Large ribosomal subunit protein uL23 (100 aa).

This sequence belongs to the universal ribosomal protein uL23 family. As to quaternary structure, part of the 50S ribosomal subunit. Contacts protein L29, and trigger factor when it is bound to the ribosome.

One of the early assembly proteins it binds 23S rRNA. One of the proteins that surrounds the polypeptide exit tunnel on the outside of the ribosome. Forms the main docking site for trigger factor binding to the ribosome. This is Large ribosomal subunit protein uL23 from Xylella fastidiosa (strain 9a5c).